The primary structure comprises 1737 residues: Myosin-M heavy chain (1737 aa).

The Myosin N-terminal SH3-like domain maps to 4 to 55 (LEGDIVWVPHTVNGYCRGKIIGYNEKNQVTVRLLELNEEIKINEQLIQNYNQ). The region spanning 59-886 (KDFSDMVEIQ…LYIYLEKKRY (828 aa)) is the Myosin motor domain. Position 154–161 (154–161 (GESGSGKT)) interacts with ATP. The segment at 640–727 (KSNDNNSNNN…NNNSSNNKKS (88 aa)) is disordered. 2 stretches are compositionally biased toward low complexity: residues 641 to 663 (SNDN…SSQS) and 679 to 724 (NSGS…SSNN). Residues 754-761 (YIRCIKPN) form an actin-binding region. 2 consecutive IQ domains span residues 889–918 (LVDS…SSLF) and 912–941 (NKES…LENK). The stretch at 926–1039 (QRAKKDFEQL…KKKNEQNLSL (114 aa)) forms a coiled coil. Over residues 947–1028 (RKKELERQRK…IEKKRKEEEK (82 aa)) the composition is skewed to basic and acidic residues. Disordered stretches follow at residues 947–1099 (RKKE…PSTK), 1117–1199 (LHGS…PNFN), 1266–1290 (GINK…ANSS), and 1304–1364 (SLST…SNED). Residues 1044–1070 (ITNSPSLINTTTTTTTTTTTTTNTSSP) are compositionally biased toward low complexity. Positions 1071 to 1081 (PLSPPISPRPS) are enriched in pro residues. A compositionally biased stretch (low complexity) spans 1082–1098 (TPSSTSSSSSTTSSPST). Positions 1121–1131 (SHSDKNSKEDN) are enriched in basic and acidic residues. A compositionally biased stretch (low complexity) spans 1132–1141 (NSNNNNNGDS). The segment covering 1143-1153 (IILSSDSSFGQ) has biased composition (polar residues). The segment covering 1162 to 1171 (PTPPPPPPLK) has biased composition (pro residues). Polar residues-rich tracts occupy residues 1180-1198 (GVEN…SPNF) and 1274-1288 (RTIS…SRAN). Over residues 1304–1359 (SLSTSTTPSTPTTPKTPTTLSSSSVSTSTSLSSVSSSVSSSSSSSIPTPIIESTPS) the composition is skewed to low complexity. In terms of domain architecture, DH spans 1389–1572 (FRIKIINELI…SDIVQSINEA (184 aa)). The PH domain maps to 1603-1714 (TLLMEGTVSA…WFKQIKALIQ (112 aa)).

This sequence belongs to the TRAFAC class myosin-kinesin ATPase superfamily. Myosin family. In terms of assembly, monomer.

The protein localises to the cytoplasm. In terms of biological role, myosins are actin-based motor molecules with ATPase activity. Involved in macropinocytosis and remodeling of actin cytoskeleton. This is Myosin-M heavy chain (myoM) from Dictyostelium discoideum (Social amoeba).